The sequence spans 116 residues: Cocaine- and amphetamine-regulated transcript protein (116 aa).

The N-terminal stretch at 1–27 (MESSRVRLLPLLGAALLLMLPLLGTRA) is a signal peptide. Y41 bears the Phosphotyrosine mark. S48 is modified (phosphoserine). 3 disulfides stabilise this stretch: C82-C100, C88-C108, and C102-C115.

Belongs to the CART family. Hypothalamus. Found in neurons of the ventrolateral part of the arcuate nucleus, in the external zone of the median eminence, and also found in terminals in the periventricular part of the paraventricular nucleus.

It localises to the secreted. In terms of biological role, satiety factor closely associated with the actions of leptin and neuropeptide Y; this anorectic peptide inhibits both normal and starvation-induced feeding and completely blocks the feeding response induced by neuropeptide Y and regulated by leptin in the hypothalamus. It promotes neuronal development and survival in vitro. The sequence is that of Cocaine- and amphetamine-regulated transcript protein (CARTPT) from Homo sapiens (Human).